Here is a 375-residue protein sequence, read N- to C-terminus: Anhydro-N-acetylmuramic acid kinase (375 aa).

12–19 (GTSLDGVD) lines the ATP pocket.

It belongs to the anhydro-N-acetylmuramic acid kinase family.

The enzyme catalyses 1,6-anhydro-N-acetyl-beta-muramate + ATP + H2O = N-acetyl-D-muramate 6-phosphate + ADP + H(+). Its pathway is amino-sugar metabolism; 1,6-anhydro-N-acetylmuramate degradation. It participates in cell wall biogenesis; peptidoglycan recycling. In terms of biological role, catalyzes the specific phosphorylation of 1,6-anhydro-N-acetylmuramic acid (anhMurNAc) with the simultaneous cleavage of the 1,6-anhydro ring, generating MurNAc-6-P. Is required for the utilization of anhMurNAc either imported from the medium or derived from its own cell wall murein, and thus plays a role in cell wall recycling. The chain is Anhydro-N-acetylmuramic acid kinase from Variovorax paradoxus (strain S110).